The chain runs to 208 residues: Small ribosomal subunit protein uS4 (208 aa).

The S4 RNA-binding domain occupies 98-159 (LRLDNVAYRL…AARTHIRIAA (62 aa)).

The protein belongs to the universal ribosomal protein uS4 family. In terms of assembly, part of the 30S ribosomal subunit. Contacts protein S5. The interaction surface between S4 and S5 is involved in control of translational fidelity.

In terms of biological role, one of the primary rRNA binding proteins, it binds directly to 16S rRNA where it nucleates assembly of the body of the 30S subunit. With S5 and S12 plays an important role in translational accuracy. The chain is Small ribosomal subunit protein uS4 from Acidithiobacillus ferrooxidans (strain ATCC 23270 / DSM 14882 / CIP 104768 / NCIMB 8455) (Ferrobacillus ferrooxidans (strain ATCC 23270)).